The sequence spans 159 residues: SsrA-binding protein (159 aa).

The segment covering 133-147 (KRQDLAKRDAQREMA) has biased composition (basic and acidic residues). The segment at 133-159 (KRQDLAKRDAQREMARAAGRRSKGMDD) is disordered. The span at 150–159 (AGRRSKGMDD) shows a compositional bias: basic residues.

It belongs to the SmpB family.

The protein localises to the cytoplasm. Functionally, required for rescue of stalled ribosomes mediated by trans-translation. Binds to transfer-messenger RNA (tmRNA), required for stable association of tmRNA with ribosomes. tmRNA and SmpB together mimic tRNA shape, replacing the anticodon stem-loop with SmpB. tmRNA is encoded by the ssrA gene; the 2 termini fold to resemble tRNA(Ala) and it encodes a 'tag peptide', a short internal open reading frame. During trans-translation Ala-aminoacylated tmRNA acts like a tRNA, entering the A-site of stalled ribosomes, displacing the stalled mRNA. The ribosome then switches to translate the ORF on the tmRNA; the nascent peptide is terminated with the 'tag peptide' encoded by the tmRNA and targeted for degradation. The ribosome is freed to recommence translation, which seems to be the essential function of trans-translation. This chain is SsrA-binding protein, found in Salinispora arenicola (strain CNS-205).